Reading from the N-terminus, the 854-residue chain is Nucleolar MIF4G domain-containing protein 1 homolog (854 aa).

Disordered stretches follow at residues 1–38 (MAKIKKKEAKAKPLTRKEQRKQKSEFKKQNKRLYFAGK), 55–105 (QSQL…DAEV), 120–161 (PLGK…KQRI), and 217–306 (RKWE…RDAE). Positions 15–28 (TRKEQRKQKSEFKK) are enriched in basic and acidic residues. Basic residues predominate over residues 60–71 (KNKKKKRSKKPK). Positions 88–105 (IDSDDDESIDSDFSDAEV) are enriched in acidic residues. Composition is skewed to basic and acidic residues over residues 135–156 (RQDEEAVRRKELRQQKELESKS) and 217–238 (RKWEEKQERKKKLKEQQEKEEA). Residues 242-289 (SDEEEDKEDRDEPMDNFSEDDSGSEGEDDDEDLTGEEEQSEEDSEQEE) are compositionally biased toward acidic residues. Residues 290–306 (NAPKIKEDIYGRKRDAE) are compositionally biased toward basic and acidic residues. The MIF4G domain maps to 352–553 (LKQCKGLLNR…DILNAVKNNN (202 aa)). The 115-residue stretch at 650–764 (AERRNIFCII…QLSVLKVVDF (115 aa)) folds into the MI domain.

This sequence belongs to the CWC22 family.

The protein localises to the nucleus. It localises to the nucleolus. The polypeptide is Nucleolar MIF4G domain-containing protein 1 homolog (Drosophila melanogaster (Fruit fly)).